A 49-amino-acid polypeptide reads, in one-letter code: DNA-directed RNA polymerase subunit Rpo12 (49 aa).

Zn(2+) is bound by residues C11, C27, and C30.

The protein belongs to the archaeal Rpo12/eukaryotic RPC10 RNA polymerase subunit family. Part of the RNA polymerase complex. Requires Zn(2+) as cofactor.

Its subcellular location is the cytoplasm. The protein resides in the chromosome. The enzyme catalyses RNA(n) + a ribonucleoside 5'-triphosphate = RNA(n+1) + diphosphate. Its function is as follows. DNA-dependent RNA polymerase (RNAP) catalyzes the transcription of DNA into RNA using the four ribonucleoside triphosphates as substrates. This is DNA-directed RNA polymerase subunit Rpo12 from Thermococcus kodakarensis (strain ATCC BAA-918 / JCM 12380 / KOD1) (Pyrococcus kodakaraensis (strain KOD1)).